Here is a 282-residue protein sequence, read N- to C-terminus: Putative hydrolase Bcen_5340 (282 aa).

Residues Glu124, Glu126, and Asp155 each coordinate Mg(2+).

This sequence belongs to the FAH family. Mg(2+) serves as cofactor.

This Burkholderia orbicola (strain AU 1054) protein is Putative hydrolase Bcen_5340.